A 150-amino-acid chain; its full sequence is 15 kDa calcium-binding protein (150 aa).

Ala1 carries the N-acetylalanine modification. 4 consecutive EF-hand domains span residues 7–42 (TDAE…AGKS), 43–78 (FSEE…KMMK), 81–116 (WKKS…RIEP), and 118–150 (MSKE…IKSS). The Ca(2+) site is built by Asp22, Asp24, Ser26, Thr28, Asp56, Asp58, Ser60, Thr62, Glu67, Asp94, Asp96, Asn98, Glu105, Asp131, Asp133, Asp135, Lys137, and Glu142.

It is found in the nucleus. Its subcellular location is the cytoplasm. It localises to the cytoskeleton. The protein localises to the spindle. Functionally, may play an important role in mitosis of sea urchin egg. May function as a Ca(2+)-dependent intracellular modulator of microtubule assembly. The polypeptide is 15 kDa calcium-binding protein (Hemicentrotus pulcherrimus (Sea urchin)).